The following is a 447-amino-acid chain: uncharacterized protein (447 aa).

A disordered region spans residues 39–76 (PQAAPYTRNNGMGECRRGHRQGHRAEVHDNRPADKVGQ). The span at 61–72 (HRAEVHDNRPAD) shows a compositional bias: basic and acidic residues.

This sequence belongs to the 3-oxoacid CoA-transferase subunit A family.

This is an uncharacterized protein from Archaeoglobus fulgidus (strain ATCC 49558 / DSM 4304 / JCM 9628 / NBRC 100126 / VC-16).